The following is a 130-amino-acid chain: Small ribosomal subunit protein uS8 (130 aa).

Belongs to the universal ribosomal protein uS8 family. Part of the 30S ribosomal subunit. Contacts proteins S5 and S12.

Functionally, one of the primary rRNA binding proteins, it binds directly to 16S rRNA central domain where it helps coordinate assembly of the platform of the 30S subunit. The sequence is that of Small ribosomal subunit protein uS8 from Haemophilus influenzae (strain 86-028NP).